The following is a 331-amino-acid chain: MNAPHMNDTAADAATLDDAAAPAGRPALTRREQKEAYENNKLFKRIVRQVGQAIGDYNMIEQGDKVMVCLSGGKDSYAMLDVLLRLRERAPIDFDIVAVNLDQKQPGFPEHVLPEYLKQVGVPFHIENQDTYSIVKRLVPEGKTTCSLCSRLRRGILYRVAGELGATKIALGHHRDDIVQTLLLNMFYGGKLKGMPPKLQSDDGKNIVIRPLAYVKETDLEKYAELREFPIIPCNLCGSQPNLKRAEMKALIREWDKRFPGRVDNMFNALAKVVPSHLMDTTLYPFQSLRATGEADPQGDIAFDEEPCASGDDAAAPGAAQPISIVQFDDL.

The segment at M1–Q33 is disordered. The span at D8–A23 shows a compositional bias: low complexity. The PP-loop motif signature appears at S71 to S76. Positions 146, 149, and 237 each coordinate [4Fe-4S] cluster.

Belongs to the TtcA family. Homodimer. The cofactor is Mg(2+). It depends on [4Fe-4S] cluster as a cofactor.

The protein resides in the cytoplasm. The enzyme catalyses cytidine(32) in tRNA + S-sulfanyl-L-cysteinyl-[cysteine desulfurase] + AH2 + ATP = 2-thiocytidine(32) in tRNA + L-cysteinyl-[cysteine desulfurase] + A + AMP + diphosphate + H(+). It participates in tRNA modification. In terms of biological role, catalyzes the ATP-dependent 2-thiolation of cytidine in position 32 of tRNA, to form 2-thiocytidine (s(2)C32). The sulfur atoms are provided by the cysteine/cysteine desulfurase (IscS) system. This chain is tRNA-cytidine(32) 2-sulfurtransferase, found in Burkholderia cenocepacia (strain HI2424).